The sequence spans 648 residues: MTDFDTKKLNKKWTIEDSISTYGIDKWGEKYFSINSEGNISISPDNKSQKKIDLFKLVKEFKSREINTPLIIRFNDILKDRIAELNNAFSQAIETYDYKNIYKGVFPIKCNQQRNVLEKIIEYGDRWNFGLEVGSKSELLIGLSILENQKSLLICNGYKDKKYIETAILARKLGKHPIIVIEQRDEVKRIIEAVKDLKATPILGIRSKLSSKSSGRWSKSVGDNSKFGLSIPEIMLTIKELKEANLINEMMLLHFHVGSQISDISVIKDALQEASQIFVELSKLGAPMKYIDVGGGLGIDFDGTKMSSNTSTNYSLQNYANDVIATVKDSCEVNNIQHPIIISESGRAIISHCSVLIFNILGTSHVSSQVKVSDQKKQSLIITNLIETLNQIKNLRDKKEDLSEIIELWNDAKKFKEDCLVAFRLGFICLEERAYAEELTWACAKEIANQLENNEIIHPDLSEITDTLASTYYANLSVFKSIPDTWAINQVFPIIPIHRHLEEPFCKGHFADLTCDSDGKLNNFIDNGKIKSLLNLHPPEKNNDYLIGIFMAGAYQEALGNFHNLFGNTNVIHIDINEDNSYKIKNIIKENSKSEILELLDYSSDNLVESIRVNTESAINNKTLTIQEARKLIDQIETSLRKSSYLSE.

N6-(pyridoxal phosphate)lysine is present on Lys-109. Substrate is bound at residue 291 to 301 (IDVGGGLGIDF).

The protein belongs to the Orn/Lys/Arg decarboxylase class-II family. SpeA subfamily. Requires Mg(2+) as cofactor. Pyridoxal 5'-phosphate is required as a cofactor.

The enzyme catalyses L-arginine + H(+) = agmatine + CO2. Its function is as follows. Catalyzes the biosynthesis of agmatine from arginine. The chain is Biosynthetic arginine decarboxylase from Prochlorococcus marinus subsp. pastoris (strain CCMP1986 / NIES-2087 / MED4).